Here is a 147-residue protein sequence, read N- to C-terminus: UPF0178 protein IL2341 (147 aa).

Belongs to the UPF0178 family.

The chain is UPF0178 protein IL2341 from Idiomarina loihiensis (strain ATCC BAA-735 / DSM 15497 / L2-TR).